The sequence spans 187 residues: dCTP deaminase, dUMP-forming (187 aa).

DCTP-binding positions include 101-106, Asp-119, 127-129, Gln-148, Tyr-162, Lys-170, and Gln-174; these read KSSLGR and TLE. Residue Glu-129 is the Proton donor/acceptor of the active site.

Belongs to the dCTP deaminase family. As to quaternary structure, homotrimer.

The catalysed reaction is dCTP + 2 H2O = dUMP + NH4(+) + diphosphate. The protein operates within pyrimidine metabolism; dUMP biosynthesis; dUMP from dCTP: step 1/1. In terms of biological role, bifunctional enzyme that catalyzes both the deamination of dCTP to dUTP and the hydrolysis of dUTP to dUMP without releasing the toxic dUTP intermediate. This chain is dCTP deaminase, dUMP-forming, found in Corynebacterium diphtheriae (strain ATCC 700971 / NCTC 13129 / Biotype gravis).